We begin with the raw amino-acid sequence, 279 residues long: Fructose-1,6-bisphosphatase class 1 (279 aa).

Residues E65, D85, L87, and D88 each coordinate Mg(2+). Residues 88–91 (DGSS), Y190, and K221 contribute to the substrate site. E227 serves as a coordination point for Mg(2+).

The protein belongs to the FBPase class 1 family. Homotetramer. Mg(2+) serves as cofactor.

It localises to the cytoplasm. It catalyses the reaction beta-D-fructose 1,6-bisphosphate + H2O = beta-D-fructose 6-phosphate + phosphate. The protein operates within carbohydrate biosynthesis; gluconeogenesis. This Helicobacter hepaticus (strain ATCC 51449 / 3B1) protein is Fructose-1,6-bisphosphatase class 1.